The chain runs to 501 residues: Archaemetzincin-1 (501 aa).

Position 261 (His-261) interacts with Zn(2+). The active-site Proton acceptor is the Glu-262. His-265, Cys-272, Cys-277, Cys-296, and Cys-299 together coordinate Zn(2+). The disordered stretch occupies residues 349–370 (DSGMGCESDTEPVTSPSEPVTP).

The protein belongs to the peptidase M54 family. It depends on Zn(2+) as a cofactor.

Functionally, probable zinc metalloprotease. The protein is Archaemetzincin-1 (Amz1) of Rattus norvegicus (Rat).